Here is a 250-residue protein sequence, read N- to C-terminus: Triosephosphate isomerase (250 aa).

Substrate is bound at residue 9 to 11; sequence NWK. The active-site Electrophile is the H96. Residue E168 is the Proton acceptor of the active site. Residues G174, S216, and 237–238 contribute to the substrate site; that span reads GG.

It belongs to the triosephosphate isomerase family. Homodimer.

It localises to the cytoplasm. It catalyses the reaction D-glyceraldehyde 3-phosphate = dihydroxyacetone phosphate. The protein operates within carbohydrate biosynthesis; gluconeogenesis. Its pathway is carbohydrate degradation; glycolysis; D-glyceraldehyde 3-phosphate from glycerone phosphate: step 1/1. Functionally, involved in the gluconeogenesis. Catalyzes stereospecifically the conversion of dihydroxyacetone phosphate (DHAP) to D-glyceraldehyde-3-phosphate (G3P). This is Triosephosphate isomerase from Leptospira interrogans serogroup Icterohaemorrhagiae serovar copenhageni (strain Fiocruz L1-130).